Reading from the N-terminus, the 297-residue chain is Acetylglutamate kinase (297 aa).

Substrate-binding positions include 73-74 (GG), Arg-95, and Asn-188.

Belongs to the acetylglutamate kinase family. ArgB subfamily.

It is found in the cytoplasm. It carries out the reaction N-acetyl-L-glutamate + ATP = N-acetyl-L-glutamyl 5-phosphate + ADP. It participates in amino-acid biosynthesis; L-arginine biosynthesis; N(2)-acetyl-L-ornithine from L-glutamate: step 2/4. Functionally, catalyzes the ATP-dependent phosphorylation of N-acetyl-L-glutamate. This Trichormus variabilis (strain ATCC 29413 / PCC 7937) (Anabaena variabilis) protein is Acetylglutamate kinase.